Here is a 285-residue protein sequence, read N- to C-terminus: Tropomyosin (285 aa).

A coiled-coil region spans residues M1–D273.

It belongs to the tropomyosin family. Homodimer.

In terms of biological role, tropomyosin, in association with the troponin complex, plays a central role in the calcium dependent regulation of muscle contraction. This Chironomus kiiensis (Midge) protein is Tropomyosin.